Here is a 924-residue protein sequence, read N- to C-terminus: MASNNTSQRSGFSSFFCRLKTYFCNHFLCLFVLSFFPLSFRRLCLLCHLCEKSNLWLSSDNSASVVKQEREVLPTNVKPLHYDLTIEPIFDNFTFKGEETIDFQVNEKTNFITLNSLEIEVQEAKIDGKSVTDISFDAGKQTVTFKFDDDLSTGSIAKLYIKFTGELNDKMAGFYRASYQEDGKTKYMATTQMEPTDCRRAFPSYDEPAAKSKFTISLIADKELVCLSNSSEKETVSLDGNKKKVTFQTTPLMSTYLVAFIVGDLRYISNDNYRVPIRVYSTPGTEHLGEYSANIAAQTLKFFDQQFGIDYPYDKLDMVAVPSFSAGAMENCGLVTFRTVDLLIDADNANVNTKQRVTEVVMHELAHQWFGDLVTMEFWDGLWLNEGFATWMSWYACNSLYPDWKVWESYVSDSLQHALTLDALRASHPIEVPVKRADEINQIFDAISYSKGSSLLRMISKWLGEDVFVKGVSNYLKKHKWGNTKTSDLWEALSEASGEDVVKVMDIWTKNIGFPIVKVEEIGNGEIKVTQNRFLATGDVKESEDKTLYPVFLGLKTSEGVDESSVLETRSKTIKLPTSDDFFKINGDQSGIYRTAYEPARWTKLGKAGVEGKLSVEDRVGLVADAGSLASSGFIKTSSLLDLVKSWSKESNYVVWNEILTRIGSIKAALMFEDEATKKALEIFTRDLISEKLKETGWEFSADDSFADQQLKSSLFASAANAEDPEAVAFAKEAFAKFIAGDKKAIHPNLRASIFNTNAKYGDEKTFDELYNIYRNPSSVEEKIAALRSFGRFTKPEILDKVTGLLLQTDIVKQQDIYIPMQGLRAHKLGVEKLWTWLSENWDQIYILLPPGLSMLGSVVTLGTSGFTKEEQKKKVEEFFAQKDNKGYDQSLAQSLDIITAKSKWTDRDAKSIYEWLEANEYTK.

Positions 1–45 (MASNNTSQRSGFSSFFCRLKTYFCNHFLCLFVLSFFPLSFRRLCL) are cleaved as a signal peptide. A propeptide spanning residues 46-57 (LCHLCEKSNLWL) is cleaved from the precursor. Position 58 is an N-acetylserine; partial (Ser-58). N-linked (GlcNAc...) asparagine glycosylation occurs at Asn-92. Substrate is bound at residue Glu-194. An N-linked (GlcNAc...) asparagine glycan is attached at Asn-229. 327–331 (GAMEN) is a substrate binding site. A Zn(2+)-binding site is contributed by His-363. Glu-364 functions as the Proton acceptor in the catalytic mechanism. His-367 and Glu-386 together coordinate Zn(2+).

It belongs to the peptidase M1 family. Zn(2+) serves as cofactor.

It is found in the secreted. It localises to the cell wall. Inactivated by metal-chelating agents phenanthroline and EDTA. Inhibited by bestatin, an aminopeptidase inhibitor. Not inhibited by pepstatin A and PMSF, inhibitors of aspartic and the serine proteases, respectively. Not inhibited by carboxypeptidase inhibitor. Metalloprotease that specifically hydrolyzes peptides with N-terminal alanine, arginine and leucine residues. The sequence is that of Aminopeptidase 2 (APE2) from Candida albicans (strain SC5314 / ATCC MYA-2876) (Yeast).